The sequence spans 103 residues: Small ribosomal subunit protein uS10 (103 aa).

It belongs to the universal ribosomal protein uS10 family. Part of the 30S ribosomal subunit.

Involved in the binding of tRNA to the ribosomes. This chain is Small ribosomal subunit protein uS10, found in Pseudomonas savastanoi pv. phaseolicola (strain 1448A / Race 6) (Pseudomonas syringae pv. phaseolicola (strain 1448A / Race 6)).